A 162-amino-acid polypeptide reads, in one-letter code: UPF0114 protein PST_0950 (162 aa).

A run of 3 helical transmembrane segments spans residues 15–35, 53–73, and 136–156; these read LLAP…IKFF, LVLT…LVMV, and LMWY…MGYM.

Belongs to the UPF0114 family.

It is found in the cell membrane. The chain is UPF0114 protein PST_0950 from Stutzerimonas stutzeri (strain A1501) (Pseudomonas stutzeri).